Consider the following 281-residue polypeptide: Stomatin-4 (281 aa).

The helical transmembrane segment at 28–48 (WIITIISYLVVLFTLPLSAFF) threads the bilayer.

Belongs to the band 7/mec-2 family.

It is found in the membrane. This is Stomatin-4 (sto-4) from Caenorhabditis elegans.